The chain runs to 487 residues: Glutamyl-tRNA(Gln) amidotransferase subunit A (487 aa).

Catalysis depends on charge relay system residues Lys77 and Ser152. Ser176 (acyl-ester intermediate) is an active-site residue.

Belongs to the amidase family. GatA subfamily. In terms of assembly, heterotrimer of A, B and C subunits.

The catalysed reaction is L-glutamyl-tRNA(Gln) + L-glutamine + ATP + H2O = L-glutaminyl-tRNA(Gln) + L-glutamate + ADP + phosphate + H(+). Its function is as follows. Allows the formation of correctly charged Gln-tRNA(Gln) through the transamidation of misacylated Glu-tRNA(Gln) in organisms which lack glutaminyl-tRNA synthetase. The reaction takes place in the presence of glutamine and ATP through an activated gamma-phospho-Glu-tRNA(Gln). The sequence is that of Glutamyl-tRNA(Gln) amidotransferase subunit A from Limosilactobacillus fermentum (strain NBRC 3956 / LMG 18251) (Lactobacillus fermentum).